A 434-amino-acid polypeptide reads, in one-letter code: Probable carboxypeptidase BDBG_01803 (434 aa).

The N-terminal stretch at 1-20 (MKLSHLAAALSAQLVAPVAA) is a signal peptide. 3 N-linked (GlcNAc...) asparagine glycosylation sites follow: Asn-35, Asn-136, and Asn-150. Asp-160 serves as a coordination point for Zn(2+). The active-site Proton acceptor is Glu-192. Glu-193 contacts Zn(2+). The N-linked (GlcNAc...) asparagine glycan is linked to Asn-343.

It belongs to the peptidase M20A family. Requires Zn(2+) as cofactor.

The protein resides in the secreted. The protein is Probable carboxypeptidase BDBG_01803 of Blastomyces gilchristii (strain SLH14081) (Blastomyces dermatitidis).